Reading from the N-terminus, the 218-residue chain is Peptide methionine sulfoxide reductase MsrA (218 aa).

Residues 1–28 (MSFLDSYRKKTQMPSTDEALPGRAQPIP) are disordered. Cys57 is an active-site residue.

It belongs to the MsrA Met sulfoxide reductase family.

The catalysed reaction is L-methionyl-[protein] + [thioredoxin]-disulfide + H2O = L-methionyl-(S)-S-oxide-[protein] + [thioredoxin]-dithiol. It catalyses the reaction [thioredoxin]-disulfide + L-methionine + H2O = L-methionine (S)-S-oxide + [thioredoxin]-dithiol. Functionally, has an important function as a repair enzyme for proteins that have been inactivated by oxidation. Catalyzes the reversible oxidation-reduction of methionine sulfoxide in proteins to methionine. The sequence is that of Peptide methionine sulfoxide reductase MsrA from Brucella anthropi (strain ATCC 49188 / DSM 6882 / CCUG 24695 / JCM 21032 / LMG 3331 / NBRC 15819 / NCTC 12168 / Alc 37) (Ochrobactrum anthropi).